Here is a 518-residue protein sequence, read N- to C-terminus: T-box transcription factor TBX5 (518 aa).

The interval 1–46 (MADADEGFGLAHTPLEPDAKDLPCDSKPESALGAPSKSPSSPQAAF) is disordered. Over residues 15 to 28 (LEPDAKDLPCDSKP) the composition is skewed to basic and acidic residues. The segment covering 34–45 (APSKSPSSPQAA) has biased composition (low complexity). Residues 58–238 (LHERELWLKF…NNPFAKGFRG (181 aa)) constitute a DNA-binding region (T-box). Positions 250 to 356 (MQSKEYPVVP…PSEEDSFYRS (107 aa)) are disordered. Positions 262-301 (TVRQKVASNHSPFSSESRALSTSSNLGSQYQCENGVSGPS) are enriched in polar residues. Position 339 is an N6-acetyllysine (K339).

As to quaternary structure, monomer. Homodimer (via the T-box); binds DNA as homodimer. Interacts (via the T-box) with NKX2-5 (via the homeobox); this complex binds DNA. Interacts with GATA4. Interacts with KAT2A and KAT2B. Post-translationally, acetylation at Lys-339 by KAT2A and KAT2B promotes nuclear retention.

It localises to the nucleus. The protein localises to the cytoplasm. Its function is as follows. DNA-binding protein that regulates the transcription of several genes and is involved in heart development and limb pattern formation. Binds to the core DNA motif of NPPA promoter. The chain is T-box transcription factor TBX5 (TBX5) from Homo sapiens (Human).